We begin with the raw amino-acid sequence, 178 residues long: Large ribosomal subunit protein uL16 (178 aa).

The protein belongs to the universal ribosomal protein uL16 family.

The protein is Large ribosomal subunit protein uL16 of Pyrobaculum calidifontis (strain DSM 21063 / JCM 11548 / VA1).